A 318-amino-acid polypeptide reads, in one-letter code: MKQRNVNRVALIGAGSVGSSYAFALLNQSITEELVIIDLNENKAMGDAMDLNHGKVFAPNPTKTWYGTYSDCKDADIVCICAGANQKPGETRLDLVEKNLRIFKGIVEEIMASGFDGIFLIATNPVDILTYATWKFSGLPKERIIGSGTILDTGRFRFLLGEYFDIAPANVHAYIIGEHGDTELPVWSHADIGGISITELIKRNPEYTMKDLDELFINVRDAAYQIIEKKGATFYGIAMGLARITKAILNNENSVLTVSTYLDGEYGTEDVYMGVPAVVNRNGIREIVELTLNEQERQQFKHSANVLKEILAPNFKEQ.

NAD(+)-binding positions include valine 17, aspartate 38, lysine 43, tyrosine 69, and 83 to 84 (GA). Residues glutamine 86, arginine 92, and 124 to 127 (NPVD) contribute to the substrate site. Residues 122–124 (ATN) and serine 147 contribute to the NAD(+) site. Residue 152–155 (DTGR) coordinates substrate. Residues arginine 157 and histidine 172 each coordinate beta-D-fructose 1,6-bisphosphate. Histidine 179 functions as the Proton acceptor in the catalytic mechanism. Phosphotyrosine is present on tyrosine 224. Threonine 233 provides a ligand contact to substrate.

Belongs to the LDH/MDH superfamily. LDH family. Homotetramer.

It localises to the cytoplasm. It catalyses the reaction (S)-lactate + NAD(+) = pyruvate + NADH + H(+). The protein operates within fermentation; pyruvate fermentation to lactate; (S)-lactate from pyruvate: step 1/1. Allosterically activated by fructose 1,6-bisphosphate (FBP). Its function is as follows. Catalyzes the conversion of lactate to pyruvate. The polypeptide is L-lactate dehydrogenase 1 (Peribacillus psychrosaccharolyticus (Bacillus psychrosaccharolyticus)).